A 96-amino-acid polypeptide reads, in one-letter code: UPF0251 protein VPA0321 (96 aa).

It belongs to the UPF0251 family.

This Vibrio parahaemolyticus serotype O3:K6 (strain RIMD 2210633) protein is UPF0251 protein VPA0321.